The sequence spans 445 residues: MSNRKYFGTDGIRGRVGDAPITPDFVLKLGWAAGKVLARHGSRKIIIGKDTRISGYMLESALEAGLAAAGLSALFTGPMPTPAVAYLTRTFRAEAGIVISASHNPFYDNGIKFFSIDGTKLPDAVEEAIEAEMEKEISCVDSAELGKASRIVDAAGRYIEFCKATFPNELSLSELKIVVDCANGATYHIAPNVLRELGANVIAIGCEPNGVNINAEVGATDVRALQARVLAEKADLGIAFDGDGDRVIMVDHEGNKVDGDQIMYIIAREGLRQGQLRGGAVGTLMSNMGLELALKQLGIPFERAKVGDRYVLEKMQEKGWRIGAENSGHVILLDKTTTGDGIVAGLQVLAAMARNHMSLHDLCSGMKMFPQILVNVRYTAGSGDPLEHESVKAVTAEVEAALGSRGRVLLRKSGTEPLIRVMVEGEDEAQVTEFAHRIADAVKAV.

Serine 102 (phosphoserine intermediate) is an active-site residue. The Mg(2+) site is built by serine 102, aspartate 241, aspartate 243, and aspartate 245. Phosphoserine is present on serine 102.

The protein belongs to the phosphohexose mutase family. Mg(2+) is required as a cofactor. Activated by phosphorylation.

The catalysed reaction is alpha-D-glucosamine 1-phosphate = D-glucosamine 6-phosphate. Functionally, catalyzes the conversion of glucosamine-6-phosphate to glucosamine-1-phosphate. The protein is Phosphoglucosamine mutase of Escherichia coli O81 (strain ED1a).